We begin with the raw amino-acid sequence, 382 residues long: Glutamyl-tRNA reductase (382 aa).

Residues 38–41 (TCNR), Ser-85, 90–92 (ENQ), and Gln-96 contribute to the substrate site. The active-site Nucleophile is the Cys-39. 164-169 (GAGEIG) provides a ligand contact to NADP(+).

The protein belongs to the glutamyl-tRNA reductase family. Homodimer.

It catalyses the reaction (S)-4-amino-5-oxopentanoate + tRNA(Glu) + NADP(+) = L-glutamyl-tRNA(Glu) + NADPH + H(+). Its pathway is porphyrin-containing compound metabolism; protoporphyrin-IX biosynthesis; 5-aminolevulinate from L-glutamyl-tRNA(Glu): step 1/2. Its function is as follows. Catalyzes the NADPH-dependent reduction of glutamyl-tRNA(Glu) to glutamate 1-semialdehyde (GSA). The sequence is that of Glutamyl-tRNA reductase from Methanococcus maripaludis (strain C7 / ATCC BAA-1331).